A 205-amino-acid chain; its full sequence is High frequency lysogenization protein HflD homolog (205 aa).

This sequence belongs to the HflD family.

It localises to the cytoplasm. The protein localises to the cell inner membrane. The chain is High frequency lysogenization protein HflD homolog from Shewanella sp. (strain MR-4).